The sequence spans 223 residues: MHFLIPAAGSGSRMKAGKNKLLIDLEGESLIYWTLKSVFSASSTNWVGIIGQPKDKNLLLNSTKDFAHKVHWINGGDTRQQSVFNGLKALPKDAEKVLIHDGARCLINPELIDLCAKQLDENEAVILATKVTDTIKIVDNEGFIKETPDRNYLWAAQTPQGFLVDRLKKAHKMAIDKNWNVTDDASLFEMLNWKVKIIEGTYSNIKITSPIDLKIAKLFVKNP.

The protein belongs to the IspD/TarI cytidylyltransferase family. IspD subfamily.

It catalyses the reaction 2-C-methyl-D-erythritol 4-phosphate + CTP + H(+) = 4-CDP-2-C-methyl-D-erythritol + diphosphate. Its pathway is isoprenoid biosynthesis; isopentenyl diphosphate biosynthesis via DXP pathway; isopentenyl diphosphate from 1-deoxy-D-xylulose 5-phosphate: step 2/6. Functionally, catalyzes the formation of 4-diphosphocytidyl-2-C-methyl-D-erythritol from CTP and 2-C-methyl-D-erythritol 4-phosphate (MEP). In Prochlorococcus marinus (strain MIT 9301), this protein is 2-C-methyl-D-erythritol 4-phosphate cytidylyltransferase.